Here is a 236-residue protein sequence, read N- to C-terminus: Small ribosomal subunit protein eS6 (236 aa).

Belongs to the eukaryotic ribosomal protein eS6 family. Component of the small ribosomal subunit. Mature ribosomes consist of a small (40S) and a large (60S) subunit. The 40S subunit contains about 32 different proteins and 1 molecule of RNA (18S). The 60S subunit contains 45 different proteins and 3 molecules of RNA (25S, 5.8S and 5S).

The protein localises to the cytoplasm. Functionally, component of the ribosome, a large ribonucleoprotein complex responsible for the synthesis of proteins in the cell. The small ribosomal subunit (SSU) binds messenger RNAs (mRNAs) and translates the encoded message by selecting cognate aminoacyl-transfer RNA (tRNA) molecules. The large subunit (LSU) contains the ribosomal catalytic site termed the peptidyl transferase center (PTC), which catalyzes the formation of peptide bonds, thereby polymerizing the amino acids delivered by tRNAs into a polypeptide chain. The nascent polypeptides leave the ribosome through a tunnel in the LSU and interact with protein factors that function in enzymatic processing, targeting, and the membrane insertion of nascent chains at the exit of the ribosomal tunnel. RPS6A is involved in nucleolar processing of pre-18S ribosomal RNA and ribosome assembly. In Candida albicans (strain SC5314 / ATCC MYA-2876) (Yeast), this protein is Small ribosomal subunit protein eS6 (RPS6A).